The following is a 231-amino-acid chain: Ion-translocating oxidoreductase complex subunit E (231 aa).

The next 6 membrane-spanning stretches (helical) occupy residues Gly18 to Ala38, Leu39 to Val59, Ile69 to Ala89, Gly93 to Gly113, Ser127 to Ala147, and Thr182 to Leu202.

It belongs to the NqrDE/RnfAE family. As to quaternary structure, the complex is composed of six subunits: RnfA, RnfB, RnfC, RnfD, RnfE and RnfG.

It is found in the cell inner membrane. Part of a membrane-bound complex that couples electron transfer with translocation of ions across the membrane. This is Ion-translocating oxidoreductase complex subunit E from Shewanella piezotolerans (strain WP3 / JCM 13877).